The primary structure comprises 236 residues: uncharacterized protein (236 aa).

This is an uncharacterized protein from Ureaplasma parvum serovar 3 (strain ATCC 700970).